The sequence spans 1797 residues: Non-reducing polyketide synthase nscA (1797 aa).

An N-terminal acylcarrier protein transacylase domain (SAT) region spans residues 17-256 (SDDLKDLFRR…PLPVYDGLCH (240 aa)). In terms of domain architecture, Ketosynthase family 3 (KS3) spans 392-825 (SSKLAIVGMA…GGNTTLLLED (434 aa)). Catalysis depends on for beta-ketoacyl synthase activity residues Cys565, His700, and His743. The malonyl-CoA:ACP transacylase (MAT) domain stretch occupies residues 931 to 1251 (FTGQGAYYSG…SLVTLHLAGL (321 aa)). The interval 1318–1637 (TSLIHQITAE…RLLMDRFFSP (320 aa)) is product template (PT) domain. The N-terminal hotdog fold stretch occupies residues 1322-1458 (HQITAETIES…ATVRFEDPAA (137 aa)). One can recognise a PKS/mFAS DH domain in the interval 1322–1632 (HQITAETIES…FRRVPRLLMD (311 aa)). Residue His1354 is the Proton acceptor; for dehydratase activity of the active site. The interval 1482-1632 (VEGKASRLSK…FRRVPRLLMD (151 aa)) is C-terminal hotdog fold. Asp1543 acts as the Proton donor; for dehydratase activity in catalysis. Residues 1663–1686 (SVPEISAPSPSIVVSDSTANNTLT) show a composition bias toward polar residues. Residues 1663–1723 (SVPEISAPSP…PESESAEPLG (61 aa)) are disordered. Positions 1698–1709 (SSSESSTPKESP) are enriched in low complexity. One can recognise a Carrier domain in the interval 1720–1797 (EPLGNTVSQC…EMTAWIEEYC (78 aa)). Position 1757 is an O-(pantetheine 4'-phosphoryl)serine (Ser1757).

Pantetheine 4'-phosphate serves as cofactor.

Its pathway is secondary metabolite biosynthesis. In terms of biological role, non-reducing polyketide synthase; part of the gene cluster that mediates the biosynthesis of neosartoricin B, a prenylated anthracenone that probably exhibits T-cell antiproliferative activity, suggestive of a physiological role as an immunosuppressive agent. The non-reducing polyketide synthase nscA probably synthesizes and cyclizes the decaketide backbone. The hydrolase nscB then mediates the product release through hydrolysis followed by spontaneous decarboxylation. The prenyltransferase nscD catalyzes the addition of the dimethylallyl group to the aromatic C5. The FAD-dependent monooxygenase nscC is then responsible for the stereospecific hydroxylation at C2. Neosartoricin B can be converted into two additional compounds neosartoricins C and D. Neosartoricin C is a spirocyclic compound that is cyclized through the attack of C3 hydroxyl on C14, followed by dehydration. On the other hand, neosartoricin D is a further cyclized compound in which attack of C2 on C14 in neosartoricin C results in the formation of the acetal-containing dioxabicyclo-octanone ring. Both of these compounds are novel and possibly represent related metabolites of the gene cluster. This Arthroderma gypseum (strain ATCC MYA-4604 / CBS 118893) (Microsporum gypseum) protein is Non-reducing polyketide synthase nscA.